The sequence spans 463 residues: Toxin CaTX-A (463 aa).

An N-terminal signal peptide occupies residues 1-18 (MSRGYSLHLVLFLVLSTA).

It belongs to the jellyfish toxin family. Type II subfamily. Oligomer. In terms of processing, contains disulfide bonds. As to expression, it is suggested that CaTX-B is synthesized in the tentacle, is modified (become CaTX-A) and then migrates to the nematocyst.

It is found in the secreted. It localises to the nematocyst. The protein localises to the target cell membrane. Functionally, has potent hemolytic activity. Is lethal to crayfish. Causes cutaneous inflammation in humans. May act as a pore-forming toxin, disrupting normal transmembrane ion concentration gradients in susceptible cells. The polypeptide is Toxin CaTX-A (Carybdea alata (Hawaiian box jellyfish)).